The sequence spans 474 residues: Cysteine--tRNA ligase (474 aa).

Cys27 contributes to the Zn(2+) binding site. The 'HIGH' region signature appears at Pro29 to Asn39. Zn(2+) contacts are provided by Cys212, His237, and Glu241. Residues Lys271–Ser275 carry the 'KMSKS' region motif. Position 274 (Lys274) interacts with ATP.

This sequence belongs to the class-I aminoacyl-tRNA synthetase family. Monomer. It depends on Zn(2+) as a cofactor.

The protein resides in the cytoplasm. It carries out the reaction tRNA(Cys) + L-cysteine + ATP = L-cysteinyl-tRNA(Cys) + AMP + diphosphate. This is Cysteine--tRNA ligase from Lactobacillus delbrueckii subsp. bulgaricus (strain ATCC 11842 / DSM 20081 / BCRC 10696 / JCM 1002 / NBRC 13953 / NCIMB 11778 / NCTC 12712 / WDCM 00102 / Lb 14).